The sequence spans 230 residues: Inactive L-threonine 3-dehydrogenase, mitochondrial (230 aa).

The protein belongs to the NAD(P)-dependent epimerase/dehydratase family. As to expression, expressed in all tissues examined. Detected in most cell types examined, but not observed in endothelial cells, glioma cell lines and some leukemia cell lines.

It localises to the mitochondrion. The sequence is that of Inactive L-threonine 3-dehydrogenase, mitochondrial from Homo sapiens (Human).